Consider the following 22-residue polypeptide: MMPTIFFAGILIVTTIVYLTIV.

In terms of biological role, acts as an interferon antagonist when expressed ex vivo. The polypeptide is Putative ORF3b protein (Severe acute respiratory syndrome coronavirus 2 (2019-nCoV)).